The sequence spans 775 residues: MKFLSLLLLAGIAQAIVPPREPRPPTGGGNKLLTYKECVPRATISPRSTSLAWINSDEDGQYISQSDDGALILQNIVTNTNKTLVAADKVPKGYYDYWFKPDLSAVLWATNYTKQYRHSYFANYFILDIEKGSLTPLAQDQAGDIQYAQWSPVDNSIAYVRGNDLYIWNNGTTKRTTENGGPDIFNGVPDWVYEEEIFGDRFALWFSPDGEYLAYLRFNETGVPTYTIPYYKNKQKIAPAYPRELEIRYPKVSAKNPTVQFHLLNIASSQESTIPVTAFPENDLVIGEVAWLSSGHDSVAYRAFNRVQDREKIVSIKVESKESKVIRERDGTDGWIDNLLSMSYIGDVNGKEYYVDISDASGWAHIYLYPVDGGKEIALTKGEWEVVAILKVDTKKKLIYFTSTKYHSTTRHVYSVSYDTNVMTPLVNDKEAAYYTASFSAKGGYYILSYQGPNVPYQELYSTKDSKKPLKTITSNDALLEKLKEYKLPKVSFFEIKLPSGETLNVKQRLPPNFNPHKKYPVLFTPYGGPGAQEVSQAWNSLDFKSYITSDPELEYVTWTVDNRGTGYKGRKFRSAVAKRLGFLEAQDQVFAAKELLKNRWADKDHIGIWGWSYGGFLTAKTLETDSGVFTFGISTAPVSDFRLYDSMYTERYMKTVELNADGYSETAVHKVDGFKNLKGHYLIQHGTGDDNVHFQNAAVLSNTLMNGGVTADKLTTQWFTDSDHGIRYDMDSTYQYKQLAKMVYDQKQRRPERPPMHQWSKRVLAALFGERAEE.

The first 15 residues, 1–15 (MKFLSLLLLAGIAQA), serve as a signal peptide directing secretion. Asn-81, Asn-111, Asn-170, and Asn-219 each carry an N-linked (GlcNAc...) asparagine glycan. Residues Ser-613, Asp-690, and His-725 each act as charge relay system in the active site.

It belongs to the peptidase S9B family.

The protein resides in the secreted. It catalyses the reaction Release of an N-terminal dipeptide, Xaa-Yaa-|-Zaa-, from a polypeptide, preferentially when Yaa is Pro, provided Zaa is neither Pro nor hydroxyproline.. In terms of biological role, extracellular dipeptidyl-peptidase which removes N-terminal dipeptides sequentially from polypeptides having unsubstituted N-termini provided that the penultimate residue is proline. Contributes to pathogenicity. The polypeptide is Dipeptidyl peptidase 4 (DPP4) (Trichophyton equinum (Horse ringworm fungus)).